A 565-amino-acid chain; its full sequence is Mannosyl-oligosaccharide 1,2-alpha-mannosidase (565 aa).

An intrachain disulfide couples C320 to C363. The Proton donor role is filled by E378. A Ca(2+)-binding site is contributed by T501. Composition is skewed to basic and acidic residues over residues 526-538 (NEKAQMRESKVID) and 550-565 (KSADQEAKEIIEEIAG). Positions 526-565 (NEKAQMRESKVIDKSNLPEAQPVDKSADQEAKEIIEEIAG) are disordered.

The protein belongs to the glycosyl hydrolase 47 family. Ca(2+) is required as a cofactor.

It carries out the reaction N(4)-(alpha-D-Man-(1-&gt;2)-alpha-D-Man-(1-&gt;2)-alpha-D-Man-(1-&gt;3)-[alpha-D-Man-(1-&gt;2)-alpha-D-Man-(1-&gt;3)-[alpha-D-Man-(1-&gt;2)-alpha-D-Man-(1-&gt;6)]-alpha-D-Man-(1-&gt;6)]-beta-D-Man-(1-&gt;4)-beta-D-GlcNAc-(1-&gt;4)-beta-D-GlcNAc)-L-asparaginyl-[protein] (N-glucan mannose isomer 9A1,2,3B1,2,3) + 4 H2O = N(4)-(alpha-D-Man-(1-&gt;3)-[alpha-D-Man-(1-&gt;3)-[alpha-D-Man-(1-&gt;6)]-alpha-D-Man-(1-&gt;6)]-beta-D-Man-(1-&gt;4)-beta-D-GlcNAc-(1-&gt;4)-beta-D-GlcNAc)-L-asparaginyl-[protein] (N-glucan mannose isomer 5A1,2) + 4 beta-D-mannose. It catalyses the reaction N(4)-(alpha-D-Man-(1-&gt;2)-alpha-D-Man-(1-&gt;2)-alpha-D-Man-(1-&gt;3)-[alpha-D-Man-(1-&gt;3)-[alpha-D-Man-(1-&gt;2)-alpha-D-Man-(1-&gt;6)]-alpha-D-Man-(1-&gt;6)]-beta-D-Man-(1-&gt;4)-beta-D-GlcNAc-(1-&gt;4)-beta-D-GlcNAc)-L-asparaginyl-[protein] (N-glucan mannose isomer 8A1,2,3B1,3) + 3 H2O = N(4)-(alpha-D-Man-(1-&gt;3)-[alpha-D-Man-(1-&gt;3)-[alpha-D-Man-(1-&gt;6)]-alpha-D-Man-(1-&gt;6)]-beta-D-Man-(1-&gt;4)-beta-D-GlcNAc-(1-&gt;4)-beta-D-GlcNAc)-L-asparaginyl-[protein] (N-glucan mannose isomer 5A1,2) + 3 beta-D-mannose. It participates in protein modification; protein glycosylation. Functionally, involved in the maturation of Asn-linked oligosaccharides. Trim a single alpha-1,2-linked mannose residue from Man(9)GlcNAc(2) to produce Man(8)GlcNAc(2). The chain is Mannosyl-oligosaccharide 1,2-alpha-mannosidase (MNS1) from Candida albicans (Yeast).